Reading from the N-terminus, the 75-residue chain is Brevinin-2SN1 (75 aa).

An N-terminal signal peptide occupies residues 1-22 (MFTMKKPLLFLFFLGTISLSFC). The propeptide at 23 to 40 (EEERGADEDDEVEMTEEE) is removed in mature form. Residues C69 and C75 are joined by a disulfide bond.

The protein belongs to the frog skin active peptide (FSAP) family. Brevinin subfamily. In terms of tissue distribution, expressed by the skin glands.

It is found in the secreted. In terms of biological role, antimicrobial peptide. Active against some Gram-negative and a variety of Gram-positive bacterial strains. Active against fungus C.glabrata 090902 but not against C.albicans ATCC 10231. Shows hemolytic activity against human erythrocytes. The polypeptide is Brevinin-2SN1 (Sylvirana spinulosa (Fine-spined frog)).